An 890-amino-acid chain; its full sequence is DNA mismatch repair protein MutS (890 aa).

An ATP-binding site is contributed by 634–641 (GPNMGGKS).

It belongs to the DNA mismatch repair MutS family.

Functionally, this protein is involved in the repair of mismatches in DNA. It is possible that it carries out the mismatch recognition step. This protein has a weak ATPase activity. The polypeptide is DNA mismatch repair protein MutS (Burkholderia pseudomallei (strain K96243)).